We begin with the raw amino-acid sequence, 481 residues long: Lincomycin resistance protein (481 aa).

14 helical membrane passes run 30 to 50 (WVTLVFLAVLQLLIAVDVTVV), 67 to 87 (QLTWVVTGYTVVGGGLLMVGG), 99 to 119 (LLFGAFLFGASSLAAGLAPNL), 127 to 147 (FGQGAGEALSLPAAMSLIACS), 162 to 182 (VASVGLVLGFLLSGVITQLFS), 185 to 205 (WIFLINIPLVSLVLVAVLLLV), 215 to 235 (PVDLPGALLFTAAPLLLIFGV), 245 to 265 (LPLAVGSLLAAAVCAAAFVAV), 285 to 305 (LVANGATVLLSAALSTSFFLL), 318 to 338 (IEAGLSFLPLGLSLILACVLV), 340 to 360 (GLIERIGTTGAAVLGMALAGP), 374 to 394 (LLTSVFPGMILLLRMATGLVA), 421 to 441 (LGGASGIAVYVSIGFSPHLGG), and 446 to 466 (FTVAYSLAGIGLIAAVLAVLA).

The protein belongs to the major facilitator superfamily. TCR/Tet family.

Its subcellular location is the cell membrane. Proton-dependent transporter. May mediate the efflux of lincomycin. This is Lincomycin resistance protein (lmrA) from Streptomyces lincolnensis.